The chain runs to 502 residues: Maturase K (502 aa).

It belongs to the intron maturase 2 family. MatK subfamily.

The protein localises to the plastid. It is found in the chloroplast. In terms of biological role, usually encoded in the trnK tRNA gene intron. Probably assists in splicing its own and other chloroplast group II introns. The chain is Maturase K from Vaccinium vitis-idaea (Mountain cranberry).